Here is a 272-residue protein sequence, read N- to C-terminus: F-actin-capping protein subunit beta (272 aa).

It belongs to the F-actin-capping protein beta subunit family. Component of the F-actin capping complex, composed of a heterodimer of an alpha and a beta subunit.

The protein localises to the cytoplasm. The protein resides in the cytoskeleton. In terms of biological role, F-actin-capping proteins bind in a Ca(2+)-independent manner to the fast growing ends of actin filaments (barbed end) thereby blocking the exchange of subunits at these ends. Unlike other capping proteins (such as gelsolin and severin), these proteins do not sever actin filaments. The protein is F-actin-capping protein subunit beta (acpA) of Dictyostelium discoideum (Social amoeba).